The following is a 249-amino-acid chain: Triosephosphate isomerase (249 aa).

9–11 (NWK) contacts substrate. Residue His-95 is the Electrophile of the active site. Catalysis depends on Glu-166, which acts as the Proton acceptor. Substrate is bound by residues Gly-172, Ser-211, and 232 to 233 (GG).

This sequence belongs to the triosephosphate isomerase family. As to quaternary structure, homodimer.

The protein resides in the cytoplasm. The enzyme catalyses D-glyceraldehyde 3-phosphate = dihydroxyacetone phosphate. Its pathway is carbohydrate biosynthesis; gluconeogenesis. The protein operates within carbohydrate degradation; glycolysis; D-glyceraldehyde 3-phosphate from glycerone phosphate: step 1/1. Involved in the gluconeogenesis. Catalyzes stereospecifically the conversion of dihydroxyacetone phosphate (DHAP) to D-glyceraldehyde-3-phosphate (G3P). This is Triosephosphate isomerase from Legionella pneumophila (strain Paris).